Here is a 277-residue protein sequence, read N- to C-terminus: Protein HEAT-INDUCED TAS1 TARGET 1 (277 aa).

Belongs to the heat induced plant HTT protein family. In terms of assembly, interacts with the heat shock proteins HSP70-14 and At2g33735/HSP40, and with NFYC2 in both cytoplasm and nucleus. In terms of tissue distribution, expressed ubiquitously, including in seedlings, leaves, stems, inflorescences and siliques.

The protein resides in the cytoplasm. Its subcellular location is the nucleus. Its function is as follows. Mediates both basal and acquired thermotolerance via HSFA1s-directed pathways (e.g. HSFA1A, HSFA1B, and HSFA1D). Triggers the expression of HSFA1A and HSFA1B. The polypeptide is Protein HEAT-INDUCED TAS1 TARGET 1 (Arabidopsis thaliana (Mouse-ear cress)).